Consider the following 589-residue polypeptide: Lipoprotein LpqB (589 aa).

The signal sequence occupies residues 1–20 (MMRGVLVIMRLLCLGMLFTG). The N-palmitoyl cysteine moiety is linked to residue cysteine 21. Cysteine 21 is lipidated: S-diacylglycerol cysteine.

It belongs to the LpqB lipoprotein family.

The protein localises to the cell membrane. The protein is Lipoprotein LpqB of Mycobacterium leprae (strain TN).